The primary structure comprises 437 residues: Protein RecA (437 aa).

69 to 76 (GPESSGKT) contacts ATP. A disordered region spans residues 343–437 (HDAAVRTSPD…GNGKSVKRKG (95 aa)). Polar residues-rich tracts occupy residues 350 to 371 (SPDTNSRKVSGTGAVHTTSGSP), 380 to 391 (GAVNNSRDSTGG), and 400 to 426 (LNLSVNRDVSTDTVSSKISDATHNQKP).

This sequence belongs to the RecA family.

It is found in the cytoplasm. In terms of biological role, can catalyze the hydrolysis of ATP in the presence of single-stranded DNA, the ATP-dependent uptake of single-stranded DNA by duplex DNA, and the ATP-dependent hybridization of homologous single-stranded DNAs. It interacts with LexA causing its activation and leading to its autocatalytic cleavage. The polypeptide is Protein RecA (Tropheryma whipplei (strain Twist) (Whipple's bacillus)).